The primary structure comprises 143 residues: Peptide methionine sulfoxide reductase MsrB (143 aa).

In terms of domain architecture, MsrB spans 5-126; the sequence is KEEKIKSLNR…NSAALRFVPK (122 aa). The Nucleophile role is filled by C115.

The protein belongs to the MsrB Met sulfoxide reductase family.

It carries out the reaction L-methionyl-[protein] + [thioredoxin]-disulfide + H2O = L-methionyl-(R)-S-oxide-[protein] + [thioredoxin]-dithiol. The polypeptide is Peptide methionine sulfoxide reductase MsrB (Bacillus subtilis (strain 168)).